We begin with the raw amino-acid sequence, 658 residues long: DNA mismatch repair protein MutL (658 aa).

The segment covering 114 to 130 has biased composition (basic and acidic residues); it reads RQEDSSHATQVKAEDGK. Disordered regions lie at residues 114–138 and 353–405; these read RQED…TAAA and PMPS…HSLS. The segment covering 361–372 has biased composition (polar residues); the sequence is ENLFDSASNHPT.

Belongs to the DNA mismatch repair MutL/HexB family.

Functionally, this protein is involved in the repair of mismatches in DNA. It is required for dam-dependent methyl-directed DNA mismatch repair. May act as a 'molecular matchmaker', a protein that promotes the formation of a stable complex between two or more DNA-binding proteins in an ATP-dependent manner without itself being part of a final effector complex. The polypeptide is DNA mismatch repair protein MutL (Neisseria gonorrhoeae (strain NCCP11945)).